The primary structure comprises 122 residues: Probable DNA-directed RNA polymerase II subunit RPB11 (122 aa).

Belongs to the archaeal Rpo11/eukaryotic RPB11/RPC19 RNA polymerase subunit family. In terms of assembly, component of the RNA polymerase II (Pol II) complex consisting of 12 subunits.

It is found in the nucleus. In terms of biological role, DNA-dependent RNA polymerase catalyzes the transcription of DNA into RNA using the four ribonucleoside triphosphates as substrates. Component of RNA polymerase II which synthesizes mRNA precursors and many functional non-coding RNAs. Pol II is the central component of the basal RNA polymerase II transcription machinery. It is composed of mobile elements that move relative to each other. RPB11 is part of the core element with the central large cleft. In Caenorhabditis elegans, this protein is Probable DNA-directed RNA polymerase II subunit RPB11 (rpb-11).